A 218-amino-acid chain; its full sequence is Claudin-5 (218 aa).

Residues 1-7 are Cytoplasmic-facing; the sequence is MGSAALE. A helical transmembrane segment spans residues 8–28; it reads ILGLVLCLVGWGGLILACGLP. Residues 29–81 lie on the Extracellular side of the membrane; that stretch reads MWQVTAFLDHNIVTAQTTWKGLWMSCVVQSTGHMQCKVYDSVLALSTEVQAAR. A helical transmembrane segment spans residues 82-102; that stretch reads ALTVSAVLLAFVALFVTLAGA. The Cytoplasmic segment spans residues 103 to 122; it reads QCTTCVAPGPAKARVALTGG. A helical membrane pass occupies residues 123–143; sequence VLYLFCGLLALVPLCWFANIV. Residues 144 to 159 are Extracellular-facing; that stretch reads VREFYDPSVPVSQKYE. A helical membrane pass occupies residues 160–180; the sequence is LGAALYIGWAATALLMVGGCL. Topologically, residues 181–218 are cytoplasmic; sequence LCCGAWVCTGRPDLSFPVKYSAPRRPTATGDYDKKNYV. Residues 217-218 are interactions with TJP1, TJP2 and TJP3; that stretch reads YV.

The protein belongs to the claudin family. In terms of assembly, directly interacts with TJP1/ZO-1, TJP2/ZO-2 and TJP3/ZO-3. Interacts with MPDZ.

The protein resides in the cell junction. It is found in the tight junction. The protein localises to the cell membrane. Functionally, plays a major role in tight junction-specific obliteration of the intercellular space. This is Claudin-5 (CLDN5) from Homo sapiens (Human).